Here is a 445-residue protein sequence, read N- to C-terminus: Tubulin beta-3 chain (445 aa).

GTP-binding residues include Gln11, Glu69, Ser138, Gly142, Thr143, Gly144, Asn204, and Asn226. Glu69 contributes to the Mg(2+) binding site. A disordered region spans residues 421–445; sequence EYQQYQDATADEEEEYDEEEEEEAA. Residues 429 to 445 show a composition bias toward acidic residues; it reads TADEEEEYDEEEEEEAA.

This sequence belongs to the tubulin family. Dimer of alpha and beta chains. A typical microtubule is a hollow water-filled tube with an outer diameter of 25 nm and an inner diameter of 15 nM. Alpha-beta heterodimers associate head-to-tail to form protofilaments running lengthwise along the microtubule wall with the beta-tubulin subunit facing the microtubule plus end conferring a structural polarity. Microtubules usually have 13 protofilaments but different protofilament numbers can be found in some organisms and specialized cells. Mg(2+) is required as a cofactor.

The protein resides in the cytoplasm. It localises to the cytoskeleton. Tubulin is the major constituent of microtubules, a cylinder consisting of laterally associated linear protofilaments composed of alpha- and beta-tubulin heterodimers. Microtubules grow by the addition of GTP-tubulin dimers to the microtubule end, where a stabilizing cap forms. Below the cap, tubulin dimers are in GDP-bound state, owing to GTPase activity of alpha-tubulin. This chain is Tubulin beta-3 chain (TUBB3), found in Triticum aestivum (Wheat).